The following is a 303-amino-acid chain: Kynurenine formamidase (303 aa).

The HGGXW signature appears at 95–99 (HGGYW). The active-site Nucleophile is S164. Residues D247 and H279 contribute to the active site.

Belongs to the kynurenine formamidase family. Homodimer.

The protein localises to the cytoplasm. Its subcellular location is the cytosol. The protein resides in the nucleus. The enzyme catalyses N-formyl-L-kynurenine + H2O = L-kynurenine + formate + H(+). The protein operates within amino-acid degradation; L-tryptophan degradation via kynurenine pathway; L-kynurenine from L-tryptophan: step 2/2. Catalyzes the hydrolysis of N-formyl-L-kynurenine to L-kynurenine, the second step in the kynurenine pathway of tryptophan degradation. Kynurenine may be further oxidized to nicotinic acid, NAD(H) and NADP(H). Required for elimination of toxic metabolites. This chain is Kynurenine formamidase, found in Homo sapiens (Human).